Reading from the N-terminus, the 309-residue chain is Putative S-adenosyl-L-methionine-dependent methyltransferase Mflv_0743 (309 aa).

S-adenosyl-L-methionine contacts are provided by residues D134 and 163 to 164 (DL).

It belongs to the UPF0677 family.

Its function is as follows. Exhibits S-adenosyl-L-methionine-dependent methyltransferase activity. The polypeptide is Putative S-adenosyl-L-methionine-dependent methyltransferase Mflv_0743 (Mycolicibacterium gilvum (strain PYR-GCK) (Mycobacterium gilvum (strain PYR-GCK))).